Here is a 323-residue protein sequence, read N- to C-terminus: Acetyl-coenzyme A carboxylase carboxyl transferase subunit alpha 1 (323 aa).

A CoA carboxyltransferase C-terminal domain is found at 39–293 (RLSKKSQQLT…RRALGDSLRQ (255 aa)).

This sequence belongs to the AccA family. In terms of assembly, acetyl-CoA carboxylase is a heterohexamer composed of biotin carboxyl carrier protein (AccB), biotin carboxylase (AccC) and two subunits each of ACCase subunit alpha (AccA) and ACCase subunit beta (AccD).

Its subcellular location is the cytoplasm. It catalyses the reaction N(6)-carboxybiotinyl-L-lysyl-[protein] + acetyl-CoA = N(6)-biotinyl-L-lysyl-[protein] + malonyl-CoA. Its pathway is lipid metabolism; malonyl-CoA biosynthesis; malonyl-CoA from acetyl-CoA: step 1/1. Functionally, component of the acetyl coenzyme A carboxylase (ACC) complex. First, biotin carboxylase catalyzes the carboxylation of biotin on its carrier protein (BCCP) and then the CO(2) group is transferred by the carboxyltransferase to acetyl-CoA to form malonyl-CoA. Does not confer resistance to the endogenous polyketide antibiotic thailandamide, does not confer resistance to thailandamide when expressed in S.typhimurium. In Burkholderia thailandensis (strain ATCC 700388 / DSM 13276 / CCUG 48851 / CIP 106301 / E264), this protein is Acetyl-coenzyme A carboxylase carboxyl transferase subunit alpha 1.